A 312-amino-acid chain; its full sequence is Very-long-chain 3-oxoacyl-CoA reductase (312 aa).

The helical transmembrane segment at 4–24 threads the bilayer; sequence ALPAAGFLYWVGAGTVAYLAL. 50–79 lines the NADP(+) pocket; that stretch reads GEWAVVTGGTDGIGKSYAEELAKRGMKVVL. Helical transmembrane passes span 182 to 202 and 271 to 291; these read GAIL…LTIY and GYLI…WIYL. Serine 189 lines the substrate pocket. The Proton acceptor role is filled by tyrosine 202. The short motif at 308 to 312 is the Di-lysine motif element; the sequence is KIKKN.

It belongs to the short-chain dehydrogenases/reductases (SDR) family. 17-beta-HSD 3 subfamily.

Its subcellular location is the endoplasmic reticulum membrane. The catalysed reaction is a very-long-chain (3R)-3-hydroxyacyl-CoA + NADP(+) = a very-long-chain 3-oxoacyl-CoA + NADPH + H(+). It catalyses the reaction 17beta-estradiol + NAD(+) = estrone + NADH + H(+). It carries out the reaction 17beta-estradiol + NADP(+) = estrone + NADPH + H(+). The enzyme catalyses 3-oxooctadecanoyl-CoA + NADPH + H(+) = (3R)-hydroxyoctadecanoyl-CoA + NADP(+). The catalysed reaction is (7Z,10Z,13Z,16Z)-3-oxodocosatetraenoyl-CoA + NADPH + H(+) = (3R)-hydroxy-(7Z,10Z,13Z,16Z)-docosatetraenoyl-CoA + NADP(+). It catalyses the reaction 3-oxo-(7Z,10Z,13Z,16Z,19Z)-docosapentaenoyl-CoA + NADPH + H(+) = (3R)-hydroxy-(7Z,10Z,13Z,16Z,19Z)-docosapentaenoyl-CoA + NADP(+). It carries out the reaction (8Z,11Z,14Z)-3-oxoeicosatrienoyl-CoA + NADPH + H(+) = (3R)-hydroxy-(8Z,11Z,14Z)-eicosatrienoyl-CoA + NADP(+). The protein operates within lipid metabolism; fatty acid biosynthesis. Its pathway is steroid biosynthesis; estrogen biosynthesis. Functionally, catalyzes the second of the four reactions of the long-chain fatty acids elongation cycle. This endoplasmic reticulum-bound enzymatic process, allows the addition of two carbons to the chain of long- and very long-chain fatty acids/VLCFAs per cycle. This enzyme has a 3-ketoacyl-CoA reductase activity, reducing 3-ketoacyl-CoA to 3-hydroxyacyl-CoA, within each cycle of fatty acid elongation. Thereby, it may participate in the production of VLCFAs of different chain lengths that are involved in multiple biological processes as precursors of membrane lipids and lipid mediators. May also catalyze the transformation of estrone (E1) into estradiol (E2) and play a role in estrogen formation. The sequence is that of Very-long-chain 3-oxoacyl-CoA reductase (HSD17B12) from Macaca fascicularis (Crab-eating macaque).